We begin with the raw amino-acid sequence, 509 residues long: Bifunctional pantoate ligase/cytidylate kinase (509 aa).

The tract at residues 1 to 275 is pantoate--beta-alanine ligase; sequence MKKLIIRKTE…CGETRLIDHV (275 aa). Residue 29–36 coordinates ATP; that stretch reads MGNLHDGH. Catalysis depends on histidine 36, which acts as the Proton donor. (R)-pantoate is bound at residue glutamine 61. A beta-alanine-binding site is contributed by glutamine 61. 149 to 152 serves as a coordination point for ATP; that stretch reads GEKD. Residue glutamine 155 participates in (R)-pantoate binding. Residue 186–189 coordinates ATP; it reads LSSR. Positions 276–509 are cytidylate kinase; sequence FLMKRRPIIA…DKIPKESEIK (234 aa).

It in the N-terminal section; belongs to the pantothenate synthetase family. This sequence in the C-terminal section; belongs to the cytidylate kinase family. Type 1 subfamily.

It is found in the cytoplasm. It catalyses the reaction (R)-pantoate + beta-alanine + ATP = (R)-pantothenate + AMP + diphosphate + H(+). The enzyme catalyses CMP + ATP = CDP + ADP. It carries out the reaction dCMP + ATP = dCDP + ADP. It functions in the pathway cofactor biosynthesis; (R)-pantothenate biosynthesis; (R)-pantothenate from (R)-pantoate and beta-alanine: step 1/1. Its function is as follows. Catalyzes the condensation of pantoate with beta-alanine in an ATP-dependent reaction via a pantoyl-adenylate intermediate. Functionally, catalyzes the transfer of a phosphate group from ATP to either CMP or dCMP to form CDP or dCDP and ADP, respectively. The protein is Bifunctional pantoate ligase/cytidylate kinase of Prochlorococcus marinus (strain AS9601).